The sequence spans 262 residues: Type III pantothenate kinase (262 aa).

ATP is bound at residue 12-19 (DIGNTSIA). Residues Y94 and 109–112 (GSDV) contribute to the substrate site. Catalysis depends on D111, which acts as the Proton acceptor. Residue D132 coordinates K(+). An ATP-binding site is contributed by T135. Position 187 (T187) interacts with substrate.

Belongs to the type III pantothenate kinase family. In terms of assembly, homodimer. It depends on NH4(+) as a cofactor. K(+) is required as a cofactor.

It localises to the cytoplasm. The catalysed reaction is (R)-pantothenate + ATP = (R)-4'-phosphopantothenate + ADP + H(+). It participates in cofactor biosynthesis; coenzyme A biosynthesis; CoA from (R)-pantothenate: step 1/5. Functionally, catalyzes the phosphorylation of pantothenate (Pan), the first step in CoA biosynthesis. This is Type III pantothenate kinase from Borreliella burgdorferi (strain ATCC 35210 / DSM 4680 / CIP 102532 / B31) (Borrelia burgdorferi).